The chain runs to 448 residues: Omega-6 fatty acid desaturase, chloroplastic (448 aa).

Residues methionine 1–alanine 69 constitute a chloroplast transit peptide. Residue valine 70 is modified to N-acetylvaline. 2 consecutive transmembrane segments (helical) span residues leucine 124–isoleucine 144 and tryptophan 149–isoleucine 169. The Histidine box-1 signature appears at histidine 171–histidine 175. The short motif at histidine 207–histidine 211 is the Histidine box-2 element. 2 helical membrane-spanning segments follow: residues valine 282 to tryptophan 302 and valine 303 to valine 323. Residues histidine 367–histidine 371 carry the Histidine box-3 motif.

Belongs to the fatty acid desaturase type 1 family.

It localises to the plastid. It is found in the chloroplast inner membrane. The enzyme catalyses a (9Z)-octadecenoyl-containing glycerolipid + 2 reduced [2Fe-2S]-[ferredoxin] + O2 + 2 H(+) = a (9Z,12Z)-octadecadienoyl-containing glycerolipid + 2 oxidized [2Fe-2S]-[ferredoxin] + 2 H2O. Its pathway is lipid metabolism; polyunsaturated fatty acid biosynthesis. Its function is as follows. Chloroplast omega-6 fatty acid desaturase introduces the second double bond in the biosynthesis of 16:3 and 18:3 fatty acids, important constituents of plant membranes. It is thought to use ferredoxin as an electron donor and to act on fatty acids esterified to galactolipids, sulfolipids and phosphatidylglycerol. In Arabidopsis thaliana (Mouse-ear cress), this protein is Omega-6 fatty acid desaturase, chloroplastic.